We begin with the raw amino-acid sequence, 453 residues long: Na(+)/H(+) antiporter NhaA (453 aa).

11 helical membrane-spanning segments follow: residues 27-47 (FLHI…SALI), 78-98 (LHFW…GMEI), 114-134 (ILPI…YFIF), 143-163 (GWAV…ALLG), 172-192 (IILL…IAFF), 201-221 (GLLI…IGLA), 222-242 (SAWL…VTGV), 316-336 (PWVA…VSFA), 346-366 (FLIV…GIIT), 385-405 (WAGI…SIFV), and 421-441 (IGVL…GFIY).

Belongs to the NhaA Na(+)/H(+) (TC 2.A.33) antiporter family.

The protein resides in the cell inner membrane. The catalysed reaction is Na(+)(in) + 2 H(+)(out) = Na(+)(out) + 2 H(+)(in). In terms of biological role, na(+)/H(+) antiporter that extrudes sodium in exchange for external protons. This chain is Na(+)/H(+) antiporter NhaA, found in Bartonella tribocorum (strain CIP 105476 / IBS 506).